Here is a 98-residue protein sequence, read N- to C-terminus: Defensin (98 aa).

3 disulfide bridges follow: cysteine 61–cysteine 88, cysteine 74–cysteine 94, and cysteine 78–cysteine 96.

This sequence belongs to the invertebrate defensin family. Type 1 subfamily.

The chain is Defensin from Mamestra brassicae (Cabbage moth).